The sequence spans 575 residues: MAPTKATTRAAITSGHHQLQQAVNPILGALGAATRKGLTRRAAATGNIDPNVENMQTRAKRKADHSPIKNDKIKRSALGNLTNNVKIMTLHPAQDEEQSGVGKKPTAQQLQALMDAKKQENLSVNVFGASKMTTRASSKVEDSVENCHKVLDKLEEALARPKPRPKAVPAAKKTVLGEVQLPAMPNPMQIPVLLPPTHNLAAPQVAAVKPVRRISNDFNKTEDSLYMSALEDVSSCDSMRLSGNFEAARRRSAKLQQKTEQQPQPLLLTLPETAPSQVVPIPPVPEEVEDFDRKNWDDPFQVSHYAMDIFNYLKVREAEFPIADYMPRQIHLTTWMRTLLVDWMVEVQETFELNHETLYLAVKIVDLYLCREVINKEKLQLLGAAAFFIACKYDERQPPLIEDFLYICDGAYNHDELVRMERETLRVIKYDLGIPLSYRFLRRYARCAKVPMPTLTLARYILELSLMDYANISFSDSQMASAALFMALRMHGGPGQLDKQTWTSTLIYYTGYQLADFAEIVTALNAGLHRKPRATIKTIRNKYSHKIFHEVAKVPLLTNQELFQGNLDLNESNLS.

Positions R75–N83 match the D-box motif. S215 is modified (phosphoserine).

The protein belongs to the cyclin family. Cyclin AB subfamily. In terms of assembly, interacts with Cdk1 kinase. Ubiquitinated. Ubiquitination leads to its degradation in early anaphase. In embryo, it is expressed in all mitotically proliferating cells, with a high level in neuroblasts. Not expressed in old embryos and thereafter. Not expressed in endoreplicating tissues.

The protein resides in the nucleus. Functionally, cyclins are positive regulatory subunits of the cyclin-dependent kinases (CDKs), and thereby play an essential role in the control of the cell cycle, notably via their destruction during cell division. Probably functions redundantly with other cyclins in regulation of cell cycle. Its presence may be required to delay a deadline for completing cytokinesis that is ordinary imposed by nuclear envelope reformation. Degradation of CycB and CycB3 promote cytokinesis furrow initiation and ingression. Required with CycB for female fertility. The protein is G2/mitotic-specific cyclin-B3 (CycB3) of Drosophila melanogaster (Fruit fly).